The following is a 212-amino-acid chain: NAD(P)H dehydrogenase (quinone) 3 (212 aa).

A Flavodoxin-like domain is found at M4–V192. FMN is bound by residues S10–I15 and T78–F80. Y12 contributes to the NAD(+) binding site. A substrate-binding site is contributed by W98. FMN is bound by residues S113–G119 and H134. Residues Y161–L182 are disordered.

The protein belongs to the WrbA family. FMN serves as cofactor.

It catalyses the reaction a quinone + NADH + H(+) = a quinol + NAD(+). The catalysed reaction is a quinone + NADPH + H(+) = a quinol + NADP(+). The protein is NAD(P)H dehydrogenase (quinone) 3 of Rhizobium meliloti (strain 1021) (Ensifer meliloti).